Consider the following 379-residue polypeptide: ORC1-type DNA replication protein 2 (379 aa).

Residues 69–73 (TGKTT), Tyr211, and Arg223 contribute to the ATP site.

It belongs to the CDC6/cdc18 family. As to quaternary structure, interacts with MCM. Post-translationally, autophosphorylated on a serine. Phosphorylation is inhibited by binding to MCM. Both single-stranded DNA and double-stranded DNA inhibit the phosphorylation reaction.

Involved in regulation of DNA replication. Dissociates the MCM complex and inhibits the MCM helicase activity, suggesting that it may function as a helicase loader. Binds to both specific and random double-stranded or single-stranded DNA. The chain is ORC1-type DNA replication protein 2 (cdc6-2) from Methanothermobacter thermautotrophicus (strain ATCC 29096 / DSM 1053 / JCM 10044 / NBRC 100330 / Delta H) (Methanobacterium thermoautotrophicum).